The following is a 546-amino-acid chain: Chaperonin GroEL (546 aa).

ATP-binding positions include 30–33 (TLGP), Lys-51, 87–91 (DGTTT), Gly-415, 479–481 (NAA), and Asp-495. The interval 527–546 (DESAAPAMPGGMGGMGDMGM) is disordered. Positions 536–546 (GGMGGMGDMGM) are enriched in gly residues.

It belongs to the chaperonin (HSP60) family. As to quaternary structure, forms a cylinder of 14 subunits composed of two heptameric rings stacked back-to-back. Interacts with the co-chaperonin GroES.

It localises to the cytoplasm. It catalyses the reaction ATP + H2O + a folded polypeptide = ADP + phosphate + an unfolded polypeptide.. Its function is as follows. Together with its co-chaperonin GroES, plays an essential role in assisting protein folding. The GroEL-GroES system forms a nano-cage that allows encapsulation of the non-native substrate proteins and provides a physical environment optimized to promote and accelerate protein folding. The polypeptide is Chaperonin GroEL (Acidovorax sp. (strain JS42)).